The chain runs to 87 residues: Acetolactate synthase isozyme 2 small subunit (87 aa).

The 74-residue stretch at 5-78 (QVNVSARFNP…DVAHVAICQS (74 aa)) folds into the ACT domain.

In terms of assembly, tetramer of two large and two small chains. The cofactor is Mg(2+). Thiamine diphosphate is required as a cofactor.

It carries out the reaction 2 pyruvate + H(+) = (2S)-2-acetolactate + CO2. It participates in amino-acid biosynthesis; L-isoleucine biosynthesis; L-isoleucine from 2-oxobutanoate: step 1/4. The protein operates within amino-acid biosynthesis; L-valine biosynthesis; L-valine from pyruvate: step 1/4. The chain is Acetolactate synthase isozyme 2 small subunit (ilvM) from Escherichia coli O6:H1 (strain CFT073 / ATCC 700928 / UPEC).